The sequence spans 415 residues: Serine hydroxymethyltransferase (415 aa).

(6S)-5,6,7,8-tetrahydrofolate-binding positions include Leu121 and 125–127 (GHL). The residue at position 229 (Lys229) is an N6-(pyridoxal phosphate)lysine. 352-354 (SPF) provides a ligand contact to (6S)-5,6,7,8-tetrahydrofolate.

This sequence belongs to the SHMT family. In terms of assembly, homodimer. Requires pyridoxal 5'-phosphate as cofactor.

The protein localises to the cytoplasm. It carries out the reaction (6R)-5,10-methylene-5,6,7,8-tetrahydrofolate + glycine + H2O = (6S)-5,6,7,8-tetrahydrofolate + L-serine. It participates in one-carbon metabolism; tetrahydrofolate interconversion. Its pathway is amino-acid biosynthesis; glycine biosynthesis; glycine from L-serine: step 1/1. Its function is as follows. Catalyzes the reversible interconversion of serine and glycine with tetrahydrofolate (THF) serving as the one-carbon carrier. This reaction serves as the major source of one-carbon groups required for the biosynthesis of purines, thymidylate, methionine, and other important biomolecules. Also exhibits THF-independent aldolase activity toward beta-hydroxyamino acids, producing glycine and aldehydes, via a retro-aldol mechanism. The polypeptide is Serine hydroxymethyltransferase (Methylobacillus flagellatus (strain ATCC 51484 / DSM 6875 / VKM B-1610 / KT)).